Consider the following 491-residue polypeptide: UDP-N-acetylmuramoyl-L-alanyl-D-glutamate--2,6-diaminopimelate ligase (491 aa).

Serine 30 is a binding site for UDP-N-acetyl-alpha-D-muramoyl-L-alanyl-D-glutamate. Residue 108 to 114 coordinates ATP; it reads GTNGKTT. UDP-N-acetyl-alpha-D-muramoyl-L-alanyl-D-glutamate contacts are provided by residues asparagine 149, 150-151, serine 177, glutamine 183, and arginine 185; that span reads TT. Residue lysine 217 is modified to N6-carboxylysine. Residues arginine 383, 407–410, glycine 458, and glutamate 462 each bind meso-2,6-diaminopimelate; that span reads DNPR. The short motif at 407–410 is the Meso-diaminopimelate recognition motif element; the sequence is DNPR.

This sequence belongs to the MurCDEF family. MurE subfamily. Requires Mg(2+) as cofactor. Carboxylation is probably crucial for Mg(2+) binding and, consequently, for the gamma-phosphate positioning of ATP.

It is found in the cytoplasm. It catalyses the reaction UDP-N-acetyl-alpha-D-muramoyl-L-alanyl-D-glutamate + meso-2,6-diaminopimelate + ATP = UDP-N-acetyl-alpha-D-muramoyl-L-alanyl-gamma-D-glutamyl-meso-2,6-diaminopimelate + ADP + phosphate + H(+). It participates in cell wall biogenesis; peptidoglycan biosynthesis. Catalyzes the addition of meso-diaminopimelic acid to the nucleotide precursor UDP-N-acetylmuramoyl-L-alanyl-D-glutamate (UMAG) in the biosynthesis of bacterial cell-wall peptidoglycan. This chain is UDP-N-acetylmuramoyl-L-alanyl-D-glutamate--2,6-diaminopimelate ligase, found in Listeria monocytogenes serotype 4b (strain F2365).